We begin with the raw amino-acid sequence, 120 residues long: Holo-[acyl-carrier-protein] synthase (120 aa).

Mg(2+) is bound by residues Asp-8 and Glu-58.

It belongs to the P-Pant transferase superfamily. AcpS family. It depends on Mg(2+) as a cofactor.

The protein localises to the cytoplasm. The catalysed reaction is apo-[ACP] + CoA = holo-[ACP] + adenosine 3',5'-bisphosphate + H(+). In terms of biological role, transfers the 4'-phosphopantetheine moiety from coenzyme A to a Ser of acyl-carrier-protein. This is Holo-[acyl-carrier-protein] synthase from Streptococcus sanguinis (strain SK36).